The chain runs to 854 residues: DNA topoisomerase 1 type prokaryotic (854 aa).

The Toprim domain maps to 2–110; the sequence is SILILLESPG…KRLRFNAITK (109 aa). Mg(2+)-binding residues include glutamate 8 and aspartate 79. Residues 124 to 610 enclose the Topo IA-type catalytic domain; sequence DKNLVDAQKA…DFYDKLKPIV (487 aa). The tract at residues 158–163 is interaction with DNA; sequence SAGRVQ. Catalysis depends on tyrosine 302, which acts as the O-(5'-phospho-DNA)-tyrosine intermediate. Positions 802–854 are disordered; sequence KSAPKGGSKTIRKPSQTKYSQTKSTKSTKSTKSTNKKFVGKSAKKTTKKTTKK. Low complexity predominate over residues 814-834; sequence KPSQTKYSQTKSTKSTKSTKS. A compositionally biased stretch (basic residues) spans 835 to 854; that stretch reads TNKKFVGKSAKKTTKKTTKK.

The protein belongs to the type IA topoisomerase family. Mg(2+) serves as cofactor.

Its subcellular location is the virion. It carries out the reaction ATP-independent breakage of single-stranded DNA, followed by passage and rejoining.. In terms of biological role, releases the supercoiling and torsional tension of DNA, which is introduced during the DNA replication and transcription, by transiently cleaving and rejoining one strand of the DNA duplex. Introduces a single-strand break via transesterification at a target site in duplex DNA. The scissile phosphodiester is attacked by the catalytic tyrosine of the enzyme, resulting in the formation of a DNA-(5'-phosphotyrosyl)-enzyme intermediate and the expulsion of a 3'-OH DNA strand. The free DNA strand then undergoes passage around the unbroken strand, thus removing DNA supercoils. Finally, in the religation step, the DNA 3'-OH attacks the covalent intermediate to expel the active-site tyrosine and restore the DNA phosphodiester backbone. The protein is DNA topoisomerase 1 type prokaryotic (TOP1P) of Acanthamoeba polyphaga (Amoeba).